The sequence spans 730 residues: Catalase-peroxidase (730 aa).

A cross-link (tryptophyl-tyrosyl-methioninium (Trp-Tyr) (with M-244)) is located at residues 95–218 (WHSAGTYRVG…LAAVQMGLIY (124 aa)). Catalysis depends on H96, which acts as the Proton acceptor. The tryptophyl-tyrosyl-methioninium (Tyr-Met) (with W-95) cross-link spans 218-244 (YVNPEGPNGNPDPLGSAHDVRETFARM). Residue H259 coordinates heme b.

It belongs to the peroxidase family. Peroxidase/catalase subfamily. In terms of assembly, homodimer or homotetramer. Heme b serves as cofactor. Post-translationally, formation of the three residue Trp-Tyr-Met cross-link is important for the catalase, but not the peroxidase activity of the enzyme.

The catalysed reaction is H2O2 + AH2 = A + 2 H2O. It catalyses the reaction 2 H2O2 = O2 + 2 H2O. Its function is as follows. Bifunctional enzyme with both catalase and broad-spectrum peroxidase activity. The protein is Catalase-peroxidase of Clostridium botulinum (strain Eklund 17B / Type B).